Here is a 592-residue protein sequence, read N- to C-terminus: Aspartate--tRNA ligase (592 aa).

Glutamate 171 provides a ligand contact to L-aspartate. The aspartate stretch occupies residues 195-198 (QLFK). Arginine 217 lines the L-aspartate pocket. ATP is bound by residues 217-219 (RDE) and glutamine 226. Position 448 (histidine 448) interacts with L-aspartate. An ATP-binding site is contributed by glutamate 482. Arginine 489 contributes to the L-aspartate binding site. Residue 534–537 (GLDR) coordinates ATP.

Belongs to the class-II aminoacyl-tRNA synthetase family. Type 1 subfamily. As to quaternary structure, homodimer.

It is found in the cytoplasm. The enzyme catalyses tRNA(Asp) + L-aspartate + ATP = L-aspartyl-tRNA(Asp) + AMP + diphosphate. Catalyzes the attachment of L-aspartate to tRNA(Asp) in a two-step reaction: L-aspartate is first activated by ATP to form Asp-AMP and then transferred to the acceptor end of tRNA(Asp). In Vibrio parahaemolyticus serotype O3:K6 (strain RIMD 2210633), this protein is Aspartate--tRNA ligase.